Consider the following 552-residue polypeptide: DNA ligase (552 aa).

ATP is bound at residue glutamate 229. Lysine 231 (N6-AMP-lysine intermediate) is an active-site residue. Residues arginine 236 and glutamate 283 each contribute to the ATP site. Residues glutamate 283 and glutamate 377 each contribute to the Mg(2+) site. ATP is bound by residues lysine 382 and lysine 397.

Belongs to the ATP-dependent DNA ligase family. In terms of assembly, interacts with host TOP2A and TOP2B. Mg(2+) serves as cofactor.

The protein resides in the host cytoplasm. The enzyme catalyses ATP + (deoxyribonucleotide)n-3'-hydroxyl + 5'-phospho-(deoxyribonucleotide)m = (deoxyribonucleotide)n+m + AMP + diphosphate.. In terms of biological role, DNA ligase that seals nicks in double-stranded DNA during DNA replication, DNA recombination and DNA repair. Recruits cellular topoisomerase II to sites of viral replication and assembly. This chain is DNA ligase (OPG180), found in Homo sapiens (Human).